Consider the following 886-residue polypeptide: Alanine--tRNA ligase (886 aa).

Zn(2+)-binding residues include H568, H572, C670, and H674.

It belongs to the class-II aminoacyl-tRNA synthetase family. Zn(2+) serves as cofactor.

The protein resides in the cytoplasm. It catalyses the reaction tRNA(Ala) + L-alanine + ATP = L-alanyl-tRNA(Ala) + AMP + diphosphate. Its function is as follows. Catalyzes the attachment of alanine to tRNA(Ala) in a two-step reaction: alanine is first activated by ATP to form Ala-AMP and then transferred to the acceptor end of tRNA(Ala). Also edits incorrectly charged Ser-tRNA(Ala) and Gly-tRNA(Ala) via its editing domain. In Prochlorococcus marinus (strain NATL2A), this protein is Alanine--tRNA ligase.